The following is a 565-amino-acid chain: NAD-dependent malic enzyme (565 aa).

Y104 (proton donor) is an active-site residue. R157 provides a ligand contact to NAD(+). Residue K175 is the Proton acceptor of the active site. Residues E246, D247, and D270 each contribute to the a divalent metal cation site. 2 residues coordinate NAD(+): D270 and N418.

It belongs to the malic enzymes family. As to quaternary structure, homotetramer. Mg(2+) serves as cofactor. Requires Mn(2+) as cofactor.

The catalysed reaction is (S)-malate + NAD(+) = pyruvate + CO2 + NADH. It carries out the reaction oxaloacetate + H(+) = pyruvate + CO2. The protein is NAD-dependent malic enzyme of Erwinia tasmaniensis (strain DSM 17950 / CFBP 7177 / CIP 109463 / NCPPB 4357 / Et1/99).